The chain runs to 760 residues: ATP-dependent zinc metalloprotease FtsH (760 aa).

At 1 to 5 the chain is on the cytoplasmic side; the sequence is MNRKN. A helical membrane pass occupies residues 6-26; it reads VTRTITAIAVVVLLGWSFFYF. Residues 27-110 are Extracellular-facing; the sequence is SDDTRGYKPV…KVSTVVNQGS (84 aa). A helical transmembrane segment spans residues 111–131; the sequence is ILGELLVYVLPLLLLVGLFVM. Residues 132–760 are Cytoplasmic-facing; it reads FSRMQGGARM…EVSRTKPAHG (629 aa). Residue 203-210 participates in ATP binding; it reads GPPGTGKT. Histidine 425 lines the Zn(2+) pocket. Residue glutamate 426 is part of the active site. Zn(2+) is bound by residues histidine 429 and aspartate 501. The interval 616-760 is disordered; it reads DFGGRIPSDK…EVSRTKPAHG (145 aa). The segment covering 650–669 has biased composition (low complexity); it reads AFKAAIAQATQAAEAARSDA. Residues 740–750 show a composition bias toward acidic residues; sequence GSDESSAEQDD.

This sequence in the central section; belongs to the AAA ATPase family. In the C-terminal section; belongs to the peptidase M41 family. In terms of assembly, homohexamer. Requires Zn(2+) as cofactor.

The protein resides in the cell membrane. Functionally, acts as a processive, ATP-dependent zinc metallopeptidase for both cytoplasmic and membrane proteins. Plays a role in the quality control of integral membrane proteins. This is ATP-dependent zinc metalloprotease FtsH from Mycobacterium bovis (strain ATCC BAA-935 / AF2122/97).